An 839-amino-acid chain; its full sequence is Protein translocase subunit SecA (839 aa).

ATP contacts are provided by residues Gln85, 103 to 107 (GEGKT), and Asp493. Basic and acidic residues predominate over residues 780 to 790 (QIHEQERERAS). Residues 780–839 (QIHEQERERASQRATTAAPQNIQSQQSANTDDLPKVERNEACPCGSGKKFKNCHGRKSFS) form a disordered region. Positions 791 to 809 (QRATTAAPQNIQSQQSANT) are enriched in polar residues. Residues Cys821, Cys823, Cys832, and His833 each contribute to the Zn(2+) site. Positions 827-839 (KKFKNCHGRKSFS) are enriched in basic residues.

This sequence belongs to the SecA family. Monomer and homodimer. Part of the essential Sec protein translocation apparatus which comprises SecA, SecYEG and auxiliary proteins SecDF. Other proteins may also be involved. The cofactor is Zn(2+).

The protein resides in the cell membrane. It is found in the cytoplasm. It carries out the reaction ATP + H2O + cellular proteinSide 1 = ADP + phosphate + cellular proteinSide 2.. Part of the Sec protein translocase complex. Interacts with the SecYEG preprotein conducting channel. Has a central role in coupling the hydrolysis of ATP to the transfer of proteins into and across the cell membrane, serving as an ATP-driven molecular motor driving the stepwise translocation of polypeptide chains across the membrane. The polypeptide is Protein translocase subunit SecA (Streptococcus pyogenes serotype M1).